A 637-amino-acid polypeptide reads, in one-letter code: Biosynthetic arginine decarboxylase (637 aa).

K101 is subject to N6-(pyridoxal phosphate)lysine. 286–296 lines the substrate pocket; sequence FDVGGGLAVDY.

Belongs to the Orn/Lys/Arg decarboxylase class-II family. SpeA subfamily. Mg(2+) is required as a cofactor. It depends on pyridoxal 5'-phosphate as a cofactor.

It carries out the reaction L-arginine + H(+) = agmatine + CO2. It participates in amine and polyamine biosynthesis; agmatine biosynthesis; agmatine from L-arginine: step 1/1. Catalyzes the biosynthesis of agmatine from arginine. The polypeptide is Biosynthetic arginine decarboxylase (Shewanella woodyi (strain ATCC 51908 / MS32)).